The following is a 252-amino-acid chain: Triosephosphate isomerase (252 aa).

10–12 (NWK) contributes to the substrate binding site. Residue His-96 is the Electrophile of the active site. The active-site Proton acceptor is the Glu-168. Substrate-binding positions include Gly-174, Ser-214, and 235–236 (GG).

This sequence belongs to the triosephosphate isomerase family. As to quaternary structure, homodimer.

Its subcellular location is the cytoplasm. It catalyses the reaction D-glyceraldehyde 3-phosphate = dihydroxyacetone phosphate. It participates in carbohydrate biosynthesis; gluconeogenesis. Its pathway is carbohydrate degradation; glycolysis; D-glyceraldehyde 3-phosphate from glycerone phosphate: step 1/1. In terms of biological role, involved in the gluconeogenesis. Catalyzes stereospecifically the conversion of dihydroxyacetone phosphate (DHAP) to D-glyceraldehyde-3-phosphate (G3P). In Streptococcus pyogenes serotype M1, this protein is Triosephosphate isomerase.